We begin with the raw amino-acid sequence, 388 residues long: Xylose isomerase (388 aa).

Residues His-54 and Asp-57 contribute to the active site. 7 residues coordinate Mg(2+): Glu-181, Glu-217, His-220, Asp-245, Asp-255, Asp-257, and Asp-287.

Belongs to the xylose isomerase family. Homotetramer. Requires Mg(2+) as cofactor.

The protein resides in the cytoplasm. The enzyme catalyses alpha-D-xylose = alpha-D-xylulofuranose. Its function is as follows. Involved in D-xylose catabolism. The sequence is that of Xylose isomerase (xylA) from Streptomyces murinus.